Consider the following 146-residue polypeptide: Neutral phospholipase A2 B (146 aa).

A signal peptide spans 1–21 (MNPAHLLILAAVCVSPLGASS). The propeptide occupies 22–27 (NRPMPL). 7 disulfides stabilise this stretch: C38/C98, C53/C145, C55/C71, C70/C126, C77/C119, C87/C112, and C105/C117. The Ca(2+) site is built by Y54, G56, and G58. H74 is a catalytic residue. D75 lines the Ca(2+) pocket. Residue D120 is part of the active site.

This sequence belongs to the phospholipase A2 family. Group I subfamily. D49 sub-subfamily. The cofactor is Ca(2+). Expressed by the venom gland.

It is found in the secreted. It carries out the reaction a 1,2-diacyl-sn-glycero-3-phosphocholine + H2O = a 1-acyl-sn-glycero-3-phosphocholine + a fatty acid + H(+). In terms of biological role, PLA2 catalyzes the calcium-dependent hydrolysis of the 2-acyl groups in 3-sn-phosphoglycerides. This Naja sputatrix (Malayan spitting cobra) protein is Neutral phospholipase A2 B.